The following is a 590-amino-acid chain: MSAILSADDLNDFISPGLACIKPVENFPQKNTASEENAYEVTTEDKIQPENQAPTQISLTDCLACSGCVTSAEAVLISLQSHAEVLNTLDAHRPAPLIITQDGNLSVSRKIEPDERIFVASVSPQVRASLAATYDISERKAGHMIDQLLRGPQGLRNGGKHGNGFTWVLDTNVLRQMVLTLAAQEVTEALHTSSASSGSGKYTSPKKPILSSACPGWICYAEKTHPHVLPHLSRLKSPQALSGTFVKSILSRTLGIAPSQIWHLAVMPCFDKKLEASREELTDAAWSNISDSPVRDVDCVITSRELLMLASSRNISLPSLPLKSLAPTYAPHFPDPTVDSFLFSHTQTSKQSSKYGTSGGYLYYILLLHKEKHPGSRIEVQRGRNSDVIEYSLMSETNEAIMKAARYYGFRNIQNLVRKMKPARASRLPGANRRGAAGSGASSSGLDYAFVEVMACPGGCTNGGGQIRLDDAREANASLHSATPNDSAVTTQKHTTYEQRQWLSRVDEAYFSAESDSEDEAKPAATGSSLHDMEIRTRDILQYWTNLTGAQLEDLVYTTFRKVESDVGKDKNVNDTTRVAELAGKIGGGW.

[4Fe-4S] cluster contacts are provided by cysteine 20, cysteine 62, cysteine 65, cysteine 68, cysteine 214, cysteine 269, cysteine 456, and cysteine 460.

Belongs to the NARF family.

Its function is as follows. Component of the cytosolic Fe/S protein assembly machinery. Required for maturation of extramitochondrial Fe/S proteins. May play a role in the transfer of pre-assembled Fe/S clusters to target apoproteins. This Talaromyces marneffei (strain ATCC 18224 / CBS 334.59 / QM 7333) (Penicillium marneffei) protein is Cytosolic Fe-S cluster assembly factor nar1 (nar1).